Reading from the N-terminus, the 189-residue chain is UPF0149 protein VSAL_I2539 (189 aa).

This sequence belongs to the UPF0149 family.

In Aliivibrio salmonicida (strain LFI1238) (Vibrio salmonicida (strain LFI1238)), this protein is UPF0149 protein VSAL_I2539.